The sequence spans 365 residues: UDP-N-acetylglucosamine--N-acetylmuramyl-(pentapeptide) pyrophosphoryl-undecaprenol N-acetylglucosamine transferase (365 aa).

Residues 13 to 15 (TGG), N125, R165, S192, and Q293 each bind UDP-N-acetyl-alpha-D-glucosamine.

It belongs to the glycosyltransferase 28 family. MurG subfamily.

Its subcellular location is the cell inner membrane. It carries out the reaction di-trans,octa-cis-undecaprenyl diphospho-N-acetyl-alpha-D-muramoyl-L-alanyl-D-glutamyl-meso-2,6-diaminopimeloyl-D-alanyl-D-alanine + UDP-N-acetyl-alpha-D-glucosamine = di-trans,octa-cis-undecaprenyl diphospho-[N-acetyl-alpha-D-glucosaminyl-(1-&gt;4)]-N-acetyl-alpha-D-muramoyl-L-alanyl-D-glutamyl-meso-2,6-diaminopimeloyl-D-alanyl-D-alanine + UDP + H(+). The protein operates within cell wall biogenesis; peptidoglycan biosynthesis. In terms of biological role, cell wall formation. Catalyzes the transfer of a GlcNAc subunit on undecaprenyl-pyrophosphoryl-MurNAc-pentapeptide (lipid intermediate I) to form undecaprenyl-pyrophosphoryl-MurNAc-(pentapeptide)GlcNAc (lipid intermediate II). In Ruegeria pomeroyi (strain ATCC 700808 / DSM 15171 / DSS-3) (Silicibacter pomeroyi), this protein is UDP-N-acetylglucosamine--N-acetylmuramyl-(pentapeptide) pyrophosphoryl-undecaprenol N-acetylglucosamine transferase.